A 67-amino-acid chain; its full sequence is Small ribosomal subunit protein eS27 (67 aa).

Positions 22, 25, 41, and 44 each coordinate Zn(2+). Residues 22-44 form a C4-type zinc finger; it reads CPDCGNEQITFSHAAMVVRCLVC.

It belongs to the eukaryotic ribosomal protein eS27 family. Part of the 30S ribosomal subunit. It depends on Zn(2+) as a cofactor.

This Pyrobaculum aerophilum (strain ATCC 51768 / DSM 7523 / JCM 9630 / CIP 104966 / NBRC 100827 / IM2) protein is Small ribosomal subunit protein eS27.